The following is a 201-amino-acid chain: Adenylyl-sulfate kinase (201 aa).

Residue 35–42 coordinates ATP; the sequence is GLSGSGKS. The Phosphoserine intermediate role is filled by S109.

This sequence belongs to the APS kinase family.

It carries out the reaction adenosine 5'-phosphosulfate + ATP = 3'-phosphoadenylyl sulfate + ADP + H(+). It functions in the pathway sulfur metabolism; hydrogen sulfide biosynthesis; sulfite from sulfate: step 2/3. In terms of biological role, catalyzes the synthesis of activated sulfate. The sequence is that of Adenylyl-sulfate kinase from Enterobacter sp. (strain 638).